A 447-amino-acid polypeptide reads, in one-letter code: UDP-N-acetylglucosamine 1-carboxyvinyltransferase (447 aa).

27–28 (KN) contributes to the phosphoenolpyruvate binding site. Arginine 97 is a UDP-N-acetyl-alpha-D-glucosamine binding site. The Proton donor role is filled by cysteine 121. Cysteine 121 is subject to 2-(S-cysteinyl)pyruvic acid O-phosphothioketal. UDP-N-acetyl-alpha-D-glucosamine contacts are provided by residues 126 to 130 (RPVDL), aspartate 314, and valine 336.

It belongs to the EPSP synthase family. MurA subfamily.

It localises to the cytoplasm. The catalysed reaction is phosphoenolpyruvate + UDP-N-acetyl-alpha-D-glucosamine = UDP-N-acetyl-3-O-(1-carboxyvinyl)-alpha-D-glucosamine + phosphate. It functions in the pathway cell wall biogenesis; peptidoglycan biosynthesis. Cell wall formation. Adds enolpyruvyl to UDP-N-acetylglucosamine. The chain is UDP-N-acetylglucosamine 1-carboxyvinyltransferase from Trichormus variabilis (strain ATCC 29413 / PCC 7937) (Anabaena variabilis).